The following is a 203-amino-acid chain: uncharacterized protein (203 aa).

This is an uncharacterized protein from Methanocaldococcus jannaschii (strain ATCC 43067 / DSM 2661 / JAL-1 / JCM 10045 / NBRC 100440) (Methanococcus jannaschii).